The sequence spans 142 residues: Large ribosomal subunit protein uL11 (142 aa).

The protein belongs to the universal ribosomal protein uL11 family. In terms of assembly, part of the ribosomal stalk of the 50S ribosomal subunit. Interacts with L10 and the large rRNA to form the base of the stalk. L10 forms an elongated spine to which L12 dimers bind in a sequential fashion forming a multimeric L10(L12)X complex. Post-translationally, one or more lysine residues are methylated.

In terms of biological role, forms part of the ribosomal stalk which helps the ribosome interact with GTP-bound translation factors. This chain is Large ribosomal subunit protein uL11, found in Mycolicibacterium gilvum (strain PYR-GCK) (Mycobacterium gilvum (strain PYR-GCK)).